The following is a 100-amino-acid chain: Urease subunit gamma (100 aa).

The protein belongs to the urease gamma subunit family. In terms of assembly, heterotrimer of UreA (gamma), UreB (beta) and UreC (alpha) subunits. Three heterotrimers associate to form the active enzyme.

The protein localises to the cytoplasm. The enzyme catalyses urea + 2 H2O + H(+) = hydrogencarbonate + 2 NH4(+). It participates in nitrogen metabolism; urea degradation; CO(2) and NH(3) from urea (urease route): step 1/1. In Corynebacterium efficiens (strain DSM 44549 / YS-314 / AJ 12310 / JCM 11189 / NBRC 100395), this protein is Urease subunit gamma.